Consider the following 848-residue polypeptide: Neuroligin-3 (848 aa).

The N-terminal stretch at 1-37 (MWLRLGPPSLSLSPKPTVGRSLCLTLWFLSLALRAST) is a signal peptide. The Extracellular portion of the chain corresponds to 38–709 (QAPAPTVNTH…NPRDYSTELS (672 aa)). An N-linked (GlcNAc...) asparagine glycan is attached at N98. C106 and C141 are oxidised to a cystine. Residues 170–195 (RKGGSGAKKQGEDLADNDGDEDEDIR) are disordered. Residues 182-194 (DLADNDGDEDEDI) are compositionally biased toward acidic residues. Cystine bridges form between C340-C351 and C510-C544. The N-linked (GlcNAc...) asparagine glycan is linked to N545. Composition is skewed to polar residues over residues 645-656 (TKVPPPDTTHSS) and 677-689 (AYSN…SWNG). The segment at 645-694 (TKVPPPDTTHSSHITRRPNGKTWSTKRPAISPAYSNENAQGSWNGDQDAG) is disordered. The chain crosses the membrane as a helical span at residues 710 to 730 (VTIAVGASLLFLNVLAFAALY). Residues 731–848 (YRKDKRRQEP…LPHSHSTTRV (118 aa)) lie on the Cytoplasmic side of the membrane. S745 carries the post-translational modification Phosphoserine. Y792 carries the post-translational modification Phosphotyrosine.

This sequence belongs to the type-B carboxylesterase/lipase family. Homodimer, and heterodimer with NLGN1 and NLGN2. Interacts with neurexins NRXN1, NRXN2 and NRXN3. Interaction with neurexins is mediated by heparan sulfate glycan modification on neurexin. Interacts (via its C-terminus) with DLG4/PSD-95 (via PDZ domain 3). In terms of tissue distribution, expressed in the blood vessel walls (at protein level). Detected in throughout the brain and in spinal cord. Detected in brain, and at lower levels in pancreas islet beta cells.

It is found in the cell membrane. It localises to the synapse. Functionally, cell surface protein involved in cell-cell-interactions via its interactions with neurexin family members. Plays a role in synapse function and synaptic signal transmission, and may mediate its effects by clustering other synaptic proteins. May promote the initial formation of synapses, but is not essential for this. May also play a role in glia-glia or glia-neuron interactions in the developing peripheral nervous system. The chain is Neuroligin-3 (NLGN3) from Homo sapiens (Human).